We begin with the raw amino-acid sequence, 663 residues long: Pescadillo homolog (663 aa).

Residues 311-321 (QLKEDESKSDE) show a composition bias toward basic and acidic residues. 3 disordered regions span residues 311–360 (QLKE…YSSS), 428–447 (TNED…GPNQ), and 504–663 (AQQT…AQKA). Over residues 322–334 (TAEEDAEADDEEK) the composition is skewed to acidic residues. A BRCT domain is found at 361–477 (DPSQLFANFT…ELKSPELYAP (117 aa)). A coiled-coil region spans residues 501–663 (PLEAQQTEAE…KLEKEKAQKA (163 aa)). The segment covering 526 to 567 (DGSDVENDMDVDEAEDDEEEEEGDEEDAEEAEEEDAEEDEEE) has biased composition (acidic residues). Positions 591–620 (VDSKTKAKLEQRKALEKKAREEAEDLERAK) are enriched in basic and acidic residues.

This sequence belongs to the pescadillo family. As to quaternary structure, component of the NOP7 complex, composed of erb1, nop7 and ytm1. The complex is held together by erb1, which interacts with nop7 via its N-terminal domain and with ytm1 via a high-affinity interaction between the seven-bladed beta-propeller domains of the 2 proteins. The NOP7 complex associates with the 66S pre-ribosome.

Its subcellular location is the nucleus. The protein resides in the nucleolus. It is found in the nucleoplasm. Functionally, component of the NOP7 complex, which is required for maturation of the 25S and 5.8S ribosomal RNAs and formation of the 60S ribosome. The protein is Pescadillo homolog (nop7) of Neurospora crassa (strain ATCC 24698 / 74-OR23-1A / CBS 708.71 / DSM 1257 / FGSC 987).